The primary structure comprises 239 residues: Small ribosomal subunit protein uS2 (239 aa).

This sequence belongs to the universal ribosomal protein uS2 family.

The chain is Small ribosomal subunit protein uS2 from Lysinibacillus sphaericus (strain C3-41).